The primary structure comprises 442 residues: MALFLSKRLLRFTVIAGAVIVLLLTLNSNSRTQQYIPSSISAAFDFTSGSISPEQQVISEENDAKKLEQSALNSEASEDSEAMDEESKALKAAAEKADAPIDTKTTMDYITPSFANKAGKPKACYVTLVRNKELKGLLSSIKYVENKINKKFPYPWVFLNDEPFTEEFKEAVTKAVSSEVKFGILPKEHWSYPEWINQTKAAEIRADAATKYIYGGSESYRHMCRYQSGFFWRHELLEEYDWYWRVEPDIKLYCDINYDVFKWMQENEKVYGFTVSIHEYEVTIPTLWQTSMDFIKKNPEYLDENNLMSFLSNDNGKTYNLCHFWSNFEIANLNLWRSPAYREYFDTLDHQGGFFYERWGDAPVHSIAAALFLPKDKIHYFSDIGYHHPPYDNCPLDKEVYNSNNCECDQGNDFTFQGYSCGKEYYDAQGLVKPKNWKKFRE.

Residues 1–11 (MALFLSKRLLR) lie on the Cytoplasmic side of the membrane. Residues 12 to 30 (FTVIAGAVIVLLLTLNSNS) form a helical; Signal-anchor for type II membrane protein membrane-spanning segment. Positions 31 to 118 (RTQQYIPSSI…YITPSFANKA (88 aa)) are stem region. Over 31–442 (RTQQYIPSSI…KPKNWKKFRE (412 aa)) the chain is Lumenal. Residues 68–95 (EQSALNSEASEDSEAMDEESKALKAAAE) form a disordered region. Residues 85 to 95 (EESKALKAAAE) are compositionally biased toward basic and acidic residues. The tract at residues 119–442 (GKPKACYVTL…KPKNWKKFRE (324 aa)) is catalytic. N-linked (GlcNAc...) asparagine glycosylation occurs at N197. Residue E329 is the Nucleophile of the active site.

The protein belongs to the glycosyltransferase 15 family. It depends on Mn(2+) as a cofactor.

The protein localises to the golgi apparatus membrane. The protein operates within protein modification; protein glycosylation. Mannosyltransferase that transfers an alpha-D-mannosyl residue from GDP-mannose into lipid-linked oligosaccharide, forming an alpha-(1-&gt;2)-D-mannosyl-D-mannose linkage. Required for the attachment of the third mannose residue of O-linked saccharides. The polypeptide is Glycolipid 2-alpha-mannosyltransferase (KRE2) (Saccharomyces cerevisiae (strain ATCC 204508 / S288c) (Baker's yeast)).